The primary structure comprises 247 residues: 1-(5-phosphoribosyl)-5-[(5-phosphoribosylamino)methylideneamino] imidazole-4-carboxamide isomerase (247 aa).

Asp8 functions as the Proton acceptor in the catalytic mechanism. The active-site Proton donor is Asp131.

It belongs to the HisA/HisF family.

The protein resides in the cytoplasm. The enzyme catalyses 1-(5-phospho-beta-D-ribosyl)-5-[(5-phospho-beta-D-ribosylamino)methylideneamino]imidazole-4-carboxamide = 5-[(5-phospho-1-deoxy-D-ribulos-1-ylimino)methylamino]-1-(5-phospho-beta-D-ribosyl)imidazole-4-carboxamide. The protein operates within amino-acid biosynthesis; L-histidine biosynthesis; L-histidine from 5-phospho-alpha-D-ribose 1-diphosphate: step 4/9. The chain is 1-(5-phosphoribosyl)-5-[(5-phosphoribosylamino)methylideneamino] imidazole-4-carboxamide isomerase from Cupriavidus metallidurans (strain ATCC 43123 / DSM 2839 / NBRC 102507 / CH34) (Ralstonia metallidurans).